The primary structure comprises 36 residues: DEEPKETCSDDMCVIYCKGEEFSTGACDGPQKCKCS.

3 disulfide bridges follow: Cys-8–Cys-27, Cys-13–Cys-33, and Cys-17–Cys-35.

The protein belongs to the short scorpion toxin superfamily. Potassium channel inhibitor family. Alpha-KTx 11 subfamily. In terms of tissue distribution, expressed by the venom gland.

The protein resides in the secreted. Binds and inhibits voltage-sensitive potassium channels. Inhibits the vertebrate potassium channel Kv1.1/KCNA1 with low affinity. In Parabuthus granulatus (Granulated thick-tailed scorpion), this protein is Potassium channel toxin alpha-KTx 11.3.